We begin with the raw amino-acid sequence, 868 residues long: Probable inorganic carbon transporter subunit DabA (868 aa).

4 residues coordinate Zn(2+): C392, D394, H574, and C589.

It belongs to the inorganic carbon transporter (TC 9.A.2) DabA family. Forms a complex with DabB. Requires Zn(2+) as cofactor.

It is found in the cell membrane. Its function is as follows. Part of an energy-coupled inorganic carbon pump. The sequence is that of Probable inorganic carbon transporter subunit DabA from Bacillus cereus (strain G9842).